We begin with the raw amino-acid sequence, 122 residues long: Large ribosomal subunit protein uL14c (122 aa).

This sequence belongs to the universal ribosomal protein uL14 family. Part of the 50S ribosomal subunit.

It is found in the plastid. The protein localises to the chloroplast. Functionally, binds to 23S rRNA. The protein is Large ribosomal subunit protein uL14c of Capsella bursa-pastoris (Shepherd's purse).